An 84-amino-acid polypeptide reads, in one-letter code: U8-theraphotoxin-Hhn1e (84 aa).

An N-terminal signal peptide occupies residues 1 to 21 (MKVVLLVCLVWMMAMMELVSC). 5 cysteine pairs are disulfide-bonded: C23/C35, C29/C44, C34/C67, C54/C75, and C69/C81.

This sequence belongs to the AVIT (prokineticin) family. In terms of tissue distribution, expressed by the venom gland.

It localises to the secreted. This is U8-theraphotoxin-Hhn1e from Cyriopagopus hainanus (Chinese bird spider).